The primary structure comprises 298 residues: Probable D,D-dipeptide transport system permease protein DdpC (298 aa).

Over 1-33 (MMLSEETSAVRPQKQTRFNGAKLVWMLKGSPLT) the chain is Cytoplasmic. The helical transmembrane segment at 34–54 (VTSAVIIVLMLLMMIFSPWLA) threads the bilayer. Residues 55 to 96 (THDPNAIDLTARLLPPSAAHWFGTDEVGRDLFSRVLVGSQQS) lie on the Periplasmic side of the membrane. The chain crosses the membrane as a helical span at residues 97–117 (ILAGLVVVAIAGMIGSLLGCL). In terms of domain architecture, ABC transmembrane type-1 spans 97 to 282 (ILAGLVVVAI…LTAVGFNLFG (186 aa)). The Cytoplasmic segment spans residues 118-124 (SGVLGGR). Transmembrane regions (helical) follow at residues 125–145 (ADAI…LVLT) and 146–166 (MALA…IAIV). The Cytoplasmic portion of the chain corresponds to 167-217 (RIPFYVRLARGQALVVRQYTYVQAAKTFGASRWHLINWHILRNSLPPLIVQ). A helical transmembrane segment spans residues 218-238 (ASLDIGSAILMAATLGFIGLG). Topologically, residues 239-260 (AQQPSAEWGAMVANGRNYVLDQ) are periplasmic. Residues 261–281 (WWYCAFPGAAILLTAVGFNLF) form a helical membrane-spanning segment. Over 282–298 (GDGIRDLLDPKAGGKQS) the chain is Cytoplasmic.

It belongs to the binding-protein-dependent transport system permease family. OppBC subfamily. In terms of assembly, the complex is composed of two ATP-binding proteins (DdpD and DdpF), two transmembrane proteins (DdpB and DdpC) and a solute-binding protein (DdpA).

It localises to the cell inner membrane. Its function is as follows. Part of the ABC transporter complex DdpABCDF, which is probably involved in D,D-dipeptide transport. Probably responsible for the translocation of the substrate across the membrane. This Escherichia coli (strain K12) protein is Probable D,D-dipeptide transport system permease protein DdpC (ddpC).